The sequence spans 255 residues: Imidazole glycerol phosphate synthase subunit HisF (255 aa).

Active-site residues include aspartate 12 and aspartate 131.

This sequence belongs to the HisA/HisF family. In terms of assembly, heterodimer of HisH and HisF.

It localises to the cytoplasm. It catalyses the reaction 5-[(5-phospho-1-deoxy-D-ribulos-1-ylimino)methylamino]-1-(5-phospho-beta-D-ribosyl)imidazole-4-carboxamide + L-glutamine = D-erythro-1-(imidazol-4-yl)glycerol 3-phosphate + 5-amino-1-(5-phospho-beta-D-ribosyl)imidazole-4-carboxamide + L-glutamate + H(+). The protein operates within amino-acid biosynthesis; L-histidine biosynthesis; L-histidine from 5-phospho-alpha-D-ribose 1-diphosphate: step 5/9. Its function is as follows. IGPS catalyzes the conversion of PRFAR and glutamine to IGP, AICAR and glutamate. The HisF subunit catalyzes the cyclization activity that produces IGP and AICAR from PRFAR using the ammonia provided by the HisH subunit. The protein is Imidazole glycerol phosphate synthase subunit HisF of Sphingopyxis alaskensis (strain DSM 13593 / LMG 18877 / RB2256) (Sphingomonas alaskensis).